A 328-amino-acid polypeptide reads, in one-letter code: Biotin synthase (328 aa).

The 232-residue stretch at 51 to 282 (FNGNHVDLCS…DKIIRYAGGR (232 aa)) folds into the Radical SAM core domain. The [4Fe-4S] cluster site is built by C69, C73, and C76. Positions 112, 147, 207, and 277 each coordinate [2Fe-2S] cluster.

Belongs to the radical SAM superfamily. Biotin synthase family. As to quaternary structure, homodimer. It depends on [4Fe-4S] cluster as a cofactor. [2Fe-2S] cluster serves as cofactor.

The catalysed reaction is (4R,5S)-dethiobiotin + (sulfur carrier)-SH + 2 reduced [2Fe-2S]-[ferredoxin] + 2 S-adenosyl-L-methionine = (sulfur carrier)-H + biotin + 2 5'-deoxyadenosine + 2 L-methionine + 2 oxidized [2Fe-2S]-[ferredoxin]. The protein operates within cofactor biosynthesis; biotin biosynthesis; biotin from 7,8-diaminononanoate: step 2/2. In terms of biological role, catalyzes the conversion of dethiobiotin (DTB) to biotin by the insertion of a sulfur atom into dethiobiotin via a radical-based mechanism. In Clostridium acetobutylicum (strain ATCC 824 / DSM 792 / JCM 1419 / IAM 19013 / LMG 5710 / NBRC 13948 / NRRL B-527 / VKM B-1787 / 2291 / W), this protein is Biotin synthase.